The primary structure comprises 611 residues: MILQLLFYSLFTHLAVSQIDVNQALNQNKLNIDTISSSAISDAELEKTFPRTNLSRMRNALKSLRQNWSAKLQAMPARNYQNAGTNQENGATEQQKPLREKPRDRVKMEGDTLHQVNKAAGLNDILYQGDMVLTDDQIATILEARDETTVSTASRARRQAYRDRYYPSTTWGSSVYYYYDRTATPKIVKAFEQAVAFWQNVTCINIMQSSTAINRIRVFKGQGCYSYVGRISGVQDLSLGTGCEEFGTAAHELGHALGFFHTQSRYDRDNYISINYANIDPSYVEQFDKETSNTNFNYGMPYDYGSIMQYGATSASSNDKATMIARDTEYQDTMGSDFVGFYDISMMNEHYKCKELCPAASSAQCKNGGFPSPRNCAICICPSGYGGILCDQRPPGCGDSVTATTTWQTLTNTIGDGLPTLRDNHTMCNYWVKAPDNQAVEIRISGLTTVTIDGCIFGGVEIKTHKDQKLTGYRYCSSADQNTVHRSTGSLVPIILFNRYASTKAVLEYRAVTPSVDVSATYTTFAPIVNSCQDLHPNCDFYKFFGMCRSKKIRSNCKFTCHDCNNNNASPFGSNFFNNNYNSFNNWYTNKNKNYYPYSNSNNNKPWMWFF.

The signal sequence occupies residues 1–17; it reads MILQLLFYSLFTHLAVS. Positions 18 to 158 are excised as a propeptide; that stretch reads QIDVNQALNQ…TVSTASRARR (141 aa). N-linked (GlcNAc...) asparagine glycans are attached at residues Asn-53 and Asn-67. Over residues 82 to 95 the composition is skewed to polar residues; it reads NAGTNQENGATEQQ. The segment at 82–103 is disordered; the sequence is NAGTNQENGATEQQKPLREKPR. One can recognise a Peptidase M12A domain in the interval 159–354; it reads QAYRDRYYPS…SMMNEHYKCK (196 aa). The N-linked (GlcNAc...) asparagine glycan is linked to Asn-200. Disulfide bonds link Cys-203–Cys-353, Cys-224–Cys-243, Cys-357–Cys-376, Cys-379–Cys-390, Cys-397–Cys-428, Cys-455–Cys-476, Cys-532–Cys-564, Cys-539–Cys-557, and Cys-548–Cys-561. Residue His-251 coordinates Zn(2+). Glu-252 is a catalytic residue. Residues His-255 and His-261 each coordinate Zn(2+). The region spanning 340-396 is the EGF-like domain; sequence GFYDISMMNEHYKCKELCPAASSAQCKNGGFPSPRNCAICICPSGYGGILCDQRPPG. In terms of domain architecture, CUB spans 397–516; the sequence is CGDSVTATTT…LEYRAVTPSV (120 aa). The N-linked (GlcNAc...) asparagine glycan is linked to Asn-424. A ShKT domain is found at 532–564; the sequence is CQDLHPNCDFYKFFGMCRSKKIRSNCKFTCHDC.

The cofactor is Zn(2+). Expressed in excretory cell and in amphid and phasmid sheath glia.

The protein localises to the secreted. Its function is as follows. Metalloprotease. In Caenorhabditis elegans, this protein is Zinc metalloproteinase nas-31 (nas-31).